The following is a 144-amino-acid chain: Prefoldin subunit alpha (144 aa).

Belongs to the prefoldin alpha subunit family. Heterohexamer of two alpha and four beta subunits.

It is found in the cytoplasm. Functionally, molecular chaperone capable of stabilizing a range of proteins. Seems to fulfill an ATP-independent, HSP70-like function in archaeal de novo protein folding. The sequence is that of Prefoldin subunit alpha from Methanococcus maripaludis (strain C7 / ATCC BAA-1331).